The chain runs to 207 residues: 2,3-bisphosphoglycerate-dependent phosphoglycerate mutase (207 aa).

Residues arginine 10–asparagine 17, threonine 23–glycine 24, arginine 62, glutamate 89–tyrosine 92, lysine 100, arginine 116–arginine 117, and glycine 160–asparagine 161 each bind substrate. The Tele-phosphohistidine intermediate role is filled by histidine 11. Residue glutamate 89 is the Proton donor/acceptor of the active site.

Belongs to the phosphoglycerate mutase family. BPG-dependent PGAM subfamily. In terms of assembly, homodimer.

The catalysed reaction is (2R)-2-phosphoglycerate = (2R)-3-phosphoglycerate. It functions in the pathway carbohydrate degradation; glycolysis; pyruvate from D-glyceraldehyde 3-phosphate: step 3/5. Catalyzes the interconversion of 2-phosphoglycerate and 3-phosphoglycerate. The polypeptide is 2,3-bisphosphoglycerate-dependent phosphoglycerate mutase (Bradyrhizobium sp. (strain ORS 278)).